The following is a 404-amino-acid chain: MFQSCLPGALRSWSRGVFSTSTRPRLVLGIETSCDETGAAVLDETGRILGESLHSQKETHLKTGGIIPLVAQRLHRENISRVVQEALNRSAIEPSELTAVATTVKPGLALSLGIGLDYSLKFVRQHQKPFIPIHHMEAHALTVRMLHPLDFPFLVLLVSGGHSLLALAKGIDEFLLLGQTLDEAAGDTLDKIARRLSLRNHPECGTLSGGQAIERLAKEGDRLAFHFISPMGQNYDCNFSFAGLRTQITGAINKKEKEEGVEAGQFLSCVKDIAAASQHTVASHLAKRTHRAILFCKSKGLLPEQNPTLIVSGGVASNEYIRQILKIITDATGLHLLCPPSKFCTDNGVMIAWNGIERLKQGKGILSYSEEVSYEPKAPLGLDITSEVKEAAIKVPKLKLRTNS.

The N-terminal 27 residues, 1–27, are a transit peptide targeting the mitochondrion; it reads MFQSCLPGALRSWSRGVFSTSTRPRLV. The a divalent metal cation site is built by His135 and His139. Substrate is bound by residues 157 to 161, Asp190, Gly210, Glu214, 317 to 318, and Thr345; these read LVSGG and SN. Position 346 (Asp346) interacts with a divalent metal cation.

It belongs to the KAE1 / TsaD family. In terms of assembly, monomer. A divalent metal cation is required as a cofactor.

It is found in the mitochondrion. It catalyses the reaction L-threonylcarbamoyladenylate + adenosine(37) in tRNA = N(6)-L-threonylcarbamoyladenosine(37) in tRNA + AMP + H(+). Functionally, required for the formation of a threonylcarbamoyl group on adenosine at position 37 (t(6)A37) in mitochondrial tRNAs that read codons beginning with adenine. Probably involved in the transfer of the threonylcarbamoyl moiety of threonylcarbamoyl-AMP (TC-AMP) to the N6 group of A37. Involved in mitochondrial genome maintenance. This is tRNA N6-adenosine threonylcarbamoyltransferase, mitochondrial from Danio rerio (Zebrafish).